Consider the following 91-residue polypeptide: uncharacterized protein (91 aa).

This is an uncharacterized protein from Rickettsia prowazekii (strain Madrid E).